A 1292-amino-acid polypeptide reads, in one-letter code: Putative late blight resistance protein homolog R1C-3 (1292 aa).

2 coiled-coil regions span residues 394-414 and 505-526; these read DSLA…ESMQ and RMNE…KLLN. The 288-residue stretch at 505–792 folds into the NB-ARC domain; that stretch reads RMNEEIVGFE…SESFVKSCEG (288 aa). 538–545 lines the ATP pocket; it reads GMPGLGKT. 7 LRR repeats span residues 842–865, 920–944, 963–991, 1066–1089, 1094–1113, 1114–1142, and 1163–1187; these read AEEN…VYSH, FKFL…LFYL, LWNL…VWDM, PIRL…CISA, YLEL…TADH, LKHL…MFPQ, and FPNL…FMDI. The HMA domain maps to 1211–1278; the sequence is ETQVEDNQNT…KLRNVAYADE (68 aa).

Belongs to the disease resistance NB-LRR family.

Its subcellular location is the cytoplasm. It localises to the membrane. Confers resistance to late blight (Phytophthora infestans) races carrying the avirulence gene Avr1. Resistance proteins guard the plant against pathogens that contain an appropriate avirulence protein via an indirect interaction with this avirulence protein. That triggers a defense system including the hypersensitive response, which restricts the pathogen growth. The chain is Putative late blight resistance protein homolog R1C-3 (R1C-3) from Solanum demissum (Wild potato).